Here is a 322-residue protein sequence, read N- to C-terminus: Sideroflexin-2 (322 aa).

N-acetylmethionine is present on Met-1. A run of 5 helical transmembrane segments spans residues 100-122 (MIIT…WQWV), 142-164 (SVRQ…AVGM), 174-192 (LVGR…CVNI), 228-250 (VVIS…MERL), and 265-287 (PLQV…GLFP).

The protein belongs to the sideroflexin family. Widely expressed, highest levels in kidney, liver, and pancreas.

The protein localises to the mitochondrion inner membrane. It is found in the mitochondrion outer membrane. The catalysed reaction is L-serine(in) = L-serine(out). Functionally, mitochondrial amino-acid transporter that mediates transport of serine into mitochondria. Involved in mitochondrial iron homeostasis by regulating heme biosynthesis. This chain is Sideroflexin-2, found in Homo sapiens (Human).